Here is a 131-residue protein sequence, read N- to C-terminus: UPF0102 protein RALTA_A3032 (131 aa).

Residues 1 to 12 show a composition bias toward polar residues; the sequence is MMRSFKSTQEPS. The tract at residues 1–21 is disordered; sequence MMRSFKSTQEPSRQARGAQAE.

It belongs to the UPF0102 family.

The chain is UPF0102 protein RALTA_A3032 from Cupriavidus taiwanensis (strain DSM 17343 / BCRC 17206 / CCUG 44338 / CIP 107171 / LMG 19424 / R1) (Ralstonia taiwanensis (strain LMG 19424)).